The following is a 513-amino-acid chain: ATP synthase subunit alpha (513 aa).

Residue 169-176 (GDRQTGKT) coordinates ATP.

Belongs to the ATPase alpha/beta chains family. In terms of assembly, F-type ATPases have 2 components, CF(1) - the catalytic core - and CF(0) - the membrane proton channel. CF(1) has five subunits: alpha(3), beta(3), gamma(1), delta(1), epsilon(1). CF(0) has three main subunits: a(1), b(2) and c(9-12). The alpha and beta chains form an alternating ring which encloses part of the gamma chain. CF(1) is attached to CF(0) by a central stalk formed by the gamma and epsilon chains, while a peripheral stalk is formed by the delta and b chains.

The protein localises to the cell inner membrane. It catalyses the reaction ATP + H2O + 4 H(+)(in) = ADP + phosphate + 5 H(+)(out). Its function is as follows. Produces ATP from ADP in the presence of a proton gradient across the membrane. The alpha chain is a regulatory subunit. In Ralstonia nicotianae (strain ATCC BAA-1114 / GMI1000) (Ralstonia solanacearum), this protein is ATP synthase subunit alpha.